The chain runs to 167 residues: MINVEIIKNYDKWREHKQINKSLIKKITQNVLLRFDNFSKIKQFELSILLTNTAEILTLNKQFRNIEKATNVLSFPSNELNWQDLYSKLEFLGDSDYIHLGDIAFCYEVIYNESCEQQKNFENHFIHLLIHSILHLIGFDHQNDTEANIMENLEIEILSYFGISSPY.

3 residues coordinate Zn(2+): histidine 131, histidine 135, and histidine 141.

This sequence belongs to the endoribonuclease YbeY family. Zn(2+) is required as a cofactor.

Its subcellular location is the cytoplasm. Functionally, single strand-specific metallo-endoribonuclease involved in late-stage 70S ribosome quality control and in maturation of the 3' terminus of the 16S rRNA. This chain is Endoribonuclease YbeY, found in Rickettsia felis (strain ATCC VR-1525 / URRWXCal2) (Rickettsia azadi).